We begin with the raw amino-acid sequence, 329 residues long: Protein-arginine N-acetylglucosaminyltransferase NleB1 (329 aa).

An N-beta-linked (GlcNAc) arginine; by autocatalysis glycan is attached at R13. Residue 48 to 50 participates in UDP-N-acetyl-alpha-D-glucosamine binding; sequence QWF. A glycan (N-beta-linked (GlcNAc) arginine; by autocatalysis) is linked at R53. Y72 contacts UDP-N-acetyl-alpha-D-glucosamine. N-beta-linked (GlcNAc) arginine; by autocatalysis glycosylation is present at R159. Position 219–222 (219–222) interacts with UDP-N-acetyl-alpha-D-glucosamine; the sequence is YLDA. The DXD motif motif lies at 221 to 223; sequence DAD. D223 lines the Mn(2+) pocket. E253 (proton acceptor) is an active-site residue. R293 carries an N-beta-linked (GlcNAc) arginine; by autocatalysis glycan. N320 and S322 together coordinate Mn(2+). UDP-N-acetyl-alpha-D-glucosamine is bound by residues S322 and 327–329; that span reads SSW.

The protein belongs to the glycosyltransferase NleB family. Mn(2+) serves as cofactor. In terms of processing, auto-glycosylated: arginine GlcNAcylation is required for activity toward death domain-containing host target proteins.

The protein resides in the secreted. Its subcellular location is the host cytoplasm. The enzyme catalyses L-arginyl-[protein] + UDP-N-acetyl-alpha-D-glucosamine = N(omega)-(N-acetyl-beta-D-glucosaminyl)-L-arginyl-[protein] + UDP + H(+). Protein-arginine N-acetylglucosaminyltransferase activity is inhibited by 100066N compound (flavone analog) and 102644N compound (a substituted isoxazole). Its function is as follows. Protein-arginine N-acetylglucosaminyltransferase effector that disrupts TNF signaling in infected cells, including NF-kappa-B signaling, apoptosis and necroptosis. Acts by catalyzing the transfer of a single N-acetylglucosamine (GlcNAc) to a conserved arginine residue in the death domain of host proteins such as FADD: arginine GlcNAcylation prevents homotypic/heterotypic death domain interactions and assembly of the oligomeric TNF-alpha receptor complex, thereby disrupting TNF signaling. Also acts on host proteins without a death domain: catalyzes arginine GlcNAcylation of host GAPDH protein, thereby preventing GAPDH interaction with TRAF2, leading to inhibit NF-kappa-B signaling. Catalyzes auto-GlcNAcylation, which is required for activity toward death domain-containing host target proteins. The protein is Protein-arginine N-acetylglucosaminyltransferase NleB1 of Escherichia coli O157:H7.